The chain runs to 605 residues: Elongation factor 4 (605 aa).

Residues 11 to 193 (KNIRNFSIIA…RLVDVIPAPE (183 aa)) enclose the tr-type G domain. Residues 23–28 (DHGKST) and 140–143 (NKID) each bind GTP.

It belongs to the TRAFAC class translation factor GTPase superfamily. Classic translation factor GTPase family. LepA subfamily.

Its subcellular location is the cell inner membrane. The enzyme catalyses GTP + H2O = GDP + phosphate + H(+). Required for accurate and efficient protein synthesis under certain stress conditions. May act as a fidelity factor of the translation reaction, by catalyzing a one-codon backward translocation of tRNAs on improperly translocated ribosomes. Back-translocation proceeds from a post-translocation (POST) complex to a pre-translocation (PRE) complex, thus giving elongation factor G a second chance to translocate the tRNAs correctly. Binds to ribosomes in a GTP-dependent manner. The chain is Elongation factor 4 from Acinetobacter baylyi (strain ATCC 33305 / BD413 / ADP1).